The chain runs to 569 residues: Methionine--tRNA ligase (569 aa).

A 'HIGH' region motif is present at residues proline 11–asparagine 21. Zn(2+) is bound by residues cysteine 143, cysteine 146, cysteine 156, and cysteine 159. Positions lysine 342–serine 346 match the 'KMSKS' region motif. Threonine 345 is an ATP binding site.

This sequence belongs to the class-I aminoacyl-tRNA synthetase family. MetG type 1 subfamily. In terms of assembly, monomer. Zn(2+) serves as cofactor.

The protein localises to the cytoplasm. The enzyme catalyses tRNA(Met) + L-methionine + ATP = L-methionyl-tRNA(Met) + AMP + diphosphate. Is required not only for elongation of protein synthesis but also for the initiation of all mRNA translation through initiator tRNA(fMet) aminoacylation. This is Methionine--tRNA ligase from Caulobacter sp. (strain K31).